The primary structure comprises 579 residues: Methionine--tRNA ligase (579 aa).

Positions 14–24 (PYINGVKHLGN) match the 'HIGH' region motif. Zn(2+)-binding residues include cysteine 146, cysteine 149, cysteine 159, and cysteine 162. The short motif at 346-350 (KFSTS) is the 'KMSKS' region element. Threonine 349 is an ATP binding site.

This sequence belongs to the class-I aminoacyl-tRNA synthetase family. MetG type 1 subfamily. Monomer. Requires Zn(2+) as cofactor.

The protein localises to the cytoplasm. It carries out the reaction tRNA(Met) + L-methionine + ATP = L-methionyl-tRNA(Met) + AMP + diphosphate. In terms of biological role, is required not only for elongation of protein synthesis but also for the initiation of all mRNA translation through initiator tRNA(fMet) aminoacylation. The protein is Methionine--tRNA ligase of Hyphomonas neptunium (strain ATCC 15444).